A 265-amino-acid polypeptide reads, in one-letter code: Cyclin-C (265 aa).

A Cyclin N-terminal domain is found at 48–151; that stretch reads IQVLGEQLKL…LLENLDCCLI (104 aa).

This sequence belongs to the cyclin family. Cyclin C subfamily. Component of the Cdk8 module of the Mediator complex.

The protein resides in the nucleus. Functionally, component of the Mediator complex, a coactivator involved in regulated gene transcription of nearly all RNA polymerase II-dependent genes. Mediator functions as a bridge to convey information from gene-specific regulatory proteins to the basal RNA polymerase II transcription machinery. Mediator is recruited to promoters by direct interactions with regulatory proteins and serves as a scaffold for the assembly of a functional preinitiation complex with RNA polymerase II and the general transcription factors. Binds to and activates cyclin-dependent kinase Cdk8 that phosphorylates the CTD (C-terminal domain) of the large subunit of RNA polymerase II (RNAp II), which may inhibit the formation of a transcription initiation complex. This chain is Cyclin-C (CycC), found in Aedes aegypti (Yellowfever mosquito).